The following is a 218-amino-acid chain: Uracil-DNA glycosylase (218 aa).

It belongs to the uracil-DNA glycosylase (UDG) superfamily. UNG family. As to quaternary structure, homodimer. Interacts with protein OPG148. Component of the Uracil-DNA glycosylase(UDG)-OPG148-polymerase complex; OPG148 and UDG form a heterodimeric processivity factor that associates with OPG71 to form the processive polymerase holoenzyme.

It carries out the reaction Hydrolyzes single-stranded DNA or mismatched double-stranded DNA and polynucleotides, releasing free uracil.. In terms of biological role, plays an essential role in viral replication as a component of the DNA polymerase processivity factor. Excises uracil residues from the DNA which can arise as a result of misincorporation of dUMP residues by DNA polymerase or due to deamination of cytosine. The polypeptide is Uracil-DNA glycosylase (OPG116) (Monkeypox virus).